The primary structure comprises 754 residues: Glutathione biosynthesis bifunctional protein GshAB (754 aa).

The interval M1–A332 is glutamate--cysteine ligase. One can recognise an ATP-grasp domain in the interval K488 to F746. P515 to R573 serves as a coordination point for ATP. D695, E716, and N718 together coordinate Mg(2+). Positions 695, 716, and 718 each coordinate Mn(2+).

It in the N-terminal section; belongs to the glutamate--cysteine ligase type 1 family. Type 2 subfamily. As to quaternary structure, monomer. Requires Mg(2+) as cofactor. Mn(2+) is required as a cofactor.

It catalyses the reaction L-cysteine + L-glutamate + ATP = gamma-L-glutamyl-L-cysteine + ADP + phosphate + H(+). The enzyme catalyses gamma-L-glutamyl-L-cysteine + glycine + ATP = glutathione + ADP + phosphate + H(+). It functions in the pathway sulfur metabolism; glutathione biosynthesis; glutathione from L-cysteine and L-glutamate: step 1/2. The protein operates within sulfur metabolism; glutathione biosynthesis; glutathione from L-cysteine and L-glutamate: step 2/2. Functionally, synthesizes glutathione from L-glutamate and L-cysteine via gamma-L-glutamyl-L-cysteine. The sequence is that of Glutathione biosynthesis bifunctional protein GshAB from Streptococcus thermophilus (strain ATCC BAA-250 / LMG 18311).